The sequence spans 374 residues: MNANAPVQPSLDDLLGRIVRDDVRAMGAYHVPDASGMVKLDAMENPYHLPAMLRDALGKRLAEVALNRYPVPTADALKAQLKRVMRVPAGADVLLGNGSDEIISLIAIAAAKPGATVLAPVPGFVMYAMSAQLMGLKFVGVPLRADLTLDREAMLAAMAEHQPAVIYLAYPNNPTGNLFDAADMDALLRAARGPVCQSLVVVDEAYQPFAQHSWMPRLPEFDHLLVMRTVSKLGLAGIRLGYVAGHPKWIAELDKVRPPYNVNVLTEATAAFVLDHVDVLDAQAATLRAERTRLIDALSAQPGVTVFPSAANFLLLRVPDAAGLFERLLKRRVLVKNVSKMHPLLANCLRVTVSNPEENAQFLDAFAASLQDTP.

At K232 the chain carries N6-(pyridoxal phosphate)lysine.

Belongs to the class-II pyridoxal-phosphate-dependent aminotransferase family. Histidinol-phosphate aminotransferase subfamily. In terms of assembly, homodimer. Pyridoxal 5'-phosphate serves as cofactor.

The enzyme catalyses L-histidinol phosphate + 2-oxoglutarate = 3-(imidazol-4-yl)-2-oxopropyl phosphate + L-glutamate. Its pathway is amino-acid biosynthesis; L-histidine biosynthesis; L-histidine from 5-phospho-alpha-D-ribose 1-diphosphate: step 7/9. The chain is Histidinol-phosphate aminotransferase 1 (hisC1) from Ralstonia nicotianae (strain ATCC BAA-1114 / GMI1000) (Ralstonia solanacearum).